The sequence spans 330 residues: GTP 3',8-cyclase (330 aa).

One can recognise a Radical SAM core domain in the interval 9–225 (RFGRTVNYVR…IRRHHELIPA (217 aa)). Position 18 (R18) interacts with GTP. Positions 25 and 29 each coordinate [4Fe-4S] cluster. An S-adenosyl-L-methionine-binding site is contributed by Y31. Position 32 (C32) interacts with [4Fe-4S] cluster. R67 contributes to the GTP binding site. S-adenosyl-L-methionine is bound at residue G71. T97 contributes to the GTP binding site. Residue S121 participates in S-adenosyl-L-methionine binding. Position 158 (K158) interacts with GTP. M192 serves as a coordination point for S-adenosyl-L-methionine. Residues C256 and C259 each contribute to the [4Fe-4S] cluster site. 261–263 (RVR) lines the GTP pocket. C273 lines the [4Fe-4S] cluster pocket.

It belongs to the radical SAM superfamily. MoaA family. In terms of assembly, monomer and homodimer. [4Fe-4S] cluster serves as cofactor.

The catalysed reaction is GTP + AH2 + S-adenosyl-L-methionine = (8S)-3',8-cyclo-7,8-dihydroguanosine 5'-triphosphate + 5'-deoxyadenosine + L-methionine + A + H(+). It participates in cofactor biosynthesis; molybdopterin biosynthesis. Catalyzes the cyclization of GTP to (8S)-3',8-cyclo-7,8-dihydroguanosine 5'-triphosphate. In Marinobacter nauticus (strain ATCC 700491 / DSM 11845 / VT8) (Marinobacter aquaeolei), this protein is GTP 3',8-cyclase.